A 299-amino-acid polypeptide reads, in one-letter code: CRISPR system Cms protein Csm4 (299 aa).

Belongs to the CRISPR-associated Csm4 family. In terms of assembly, part of the Csm effector complex that includes at least Cas10(1), Csm2(3), Csm3(5), Csm4(1), Csm5(1) and mature crRNA. The Csm complex is elongated and slightly twisted with a maximal length of 215 Angstroms and a diameter of 75-80 Angstroms. It has been modeled to have a central protein filamant of Csm3 subunits along which the dsRNA helix of paired crRNA and target RNA binds. The filament is capped at one end by Cas10 and Csm4 and at the other end by Csm5; ssDNA is thought to bind to the N-terminal HD domain of Cas10. Csm with a precursor crRNA does not include Csm5, while Cas6, the enzyme probably involved in pre-crRNA processing, is found associated with a subset of the Csm complex.

Functionally, CRISPR (clustered regularly interspaced short palindromic repeat) is an adaptive immune system that provides protection against mobile genetic elements (viruses, transposable elements and conjugative plasmids). CRISPR clusters contain spacers, sequences complementary to antecedent mobile elements, and target invading nucleic acids. CRISPR clusters are transcribed and processed into CRISPR RNA (crRNA). The type III-A Csm effector complex binds crRNA and acts as a crRNA-guided RNase, DNase and cyclic oligoadenylate synthase; binding of target RNA cognate to the crRNA is required for all activities. In a heterologous host this Csm effector complex restricts ssRNA phage MS2, suggesting it may target RNA viruses in vivo. Csm functions as a non-specific ssDNase. Base-pairing between crRNA and target RNA to form a ternary Csm complex activates a ssDNase activity; target RNA cleavage suppresses the ssDNase, a temporal control that prevents uncontrolled DNA degradation. Viral RNA transcripts probably tether the Csm complex to the viral genome, recruiting Cas10 ssDNA activity which is able to degrade DNA in the transcription bubble, spatially controlling the DNase activity. Its function is as follows. The subunit probably binds to the 5' handle of the crRNA, helping in discrimination between self- and non-self. This chain is CRISPR system Cms protein Csm4, found in Streptococcus thermophilus.